A 429-amino-acid polypeptide reads, in one-letter code: Glutamate-1-semialdehyde 2,1-aminomutase (429 aa).

Residue lysine 267 is modified to N6-(pyridoxal phosphate)lysine.

Belongs to the class-III pyridoxal-phosphate-dependent aminotransferase family. HemL subfamily. As to quaternary structure, homodimer. The cofactor is pyridoxal 5'-phosphate.

It localises to the cytoplasm. It catalyses the reaction (S)-4-amino-5-oxopentanoate = 5-aminolevulinate. The protein operates within porphyrin-containing compound metabolism; protoporphyrin-IX biosynthesis; 5-aminolevulinate from L-glutamyl-tRNA(Glu): step 2/2. In Xanthomonas euvesicatoria pv. vesicatoria (strain 85-10) (Xanthomonas campestris pv. vesicatoria), this protein is Glutamate-1-semialdehyde 2,1-aminomutase.